A 269-amino-acid chain; its full sequence is MNRIHAVILDWAGTTVDFGSFAPTQIFVEAFRQAFDVEITLAEARVPMGLGKWQHIEALGKLPAVDARWQAKFGRSMSAADIDAIYAAFMPLQIAKVIDFSSPIAGVIDTIAALRAEGIKIGSCSGYPRAVMERLVPAAAEHGYRPDHWVATDDLVAGGRPGPWMALQNVIALGIDAVAHCVKVDDAAPGISEGLNAGMWTVGLAVSGNEFGATWDAYQTMSKEDVAVRREHAASKLYAAGAHYVVDSLADLPEVIAHINARLAQGERP.

The Nucleophile role is filled by aspartate 10. Mg(2+) contacts are provided by aspartate 10 and alanine 12. Lysine 52 functions as the Schiff-base intermediate with substrate in the catalytic mechanism. Aspartate 186 lines the Mg(2+) pocket.

This sequence belongs to the HAD-like hydrolase superfamily. PhnX family. Homodimer. It depends on Mg(2+) as a cofactor.

The catalysed reaction is phosphonoacetaldehyde + H2O = acetaldehyde + phosphate + H(+). Its function is as follows. Involved in phosphonate degradation. The protein is Phosphonoacetaldehyde hydrolase of Salmonella agona (strain SL483).